We begin with the raw amino-acid sequence, 354 residues long: Uroporphyrinogen decarboxylase (354 aa).

Substrate is bound by residues 27–31 (RQAGR), aspartate 77, tyrosine 154, threonine 209, and histidine 327.

Belongs to the uroporphyrinogen decarboxylase family. Homodimer.

Its subcellular location is the cytoplasm. It catalyses the reaction uroporphyrinogen III + 4 H(+) = coproporphyrinogen III + 4 CO2. Its pathway is porphyrin-containing compound metabolism; protoporphyrin-IX biosynthesis; coproporphyrinogen-III from 5-aminolevulinate: step 4/4. Functionally, catalyzes the decarboxylation of four acetate groups of uroporphyrinogen-III to yield coproporphyrinogen-III. In Pectobacterium atrosepticum (strain SCRI 1043 / ATCC BAA-672) (Erwinia carotovora subsp. atroseptica), this protein is Uroporphyrinogen decarboxylase.